The chain runs to 91 residues: Acylphosphatase (91 aa).

Residues 6 to 91 (CMRCYISGRV…WKDYISFDVL (86 aa)) form the Acylphosphatase-like domain. Active-site residues include Arg21 and Asn39.

It belongs to the acylphosphatase family.

The catalysed reaction is an acyl phosphate + H2O = a carboxylate + phosphate + H(+). The sequence is that of Acylphosphatase (acyP) from Legionella pneumophila (strain Paris).